Here is a 118-residue protein sequence, read N- to C-terminus: Large ribosomal subunit protein uL18 (118 aa).

Belongs to the universal ribosomal protein uL18 family. In terms of assembly, part of the 50S ribosomal subunit; part of the 5S rRNA/L5/L18/L25 subcomplex. Contacts the 5S and 23S rRNAs.

In terms of biological role, this is one of the proteins that bind and probably mediate the attachment of the 5S RNA into the large ribosomal subunit, where it forms part of the central protuberance. This is Large ribosomal subunit protein uL18 from Campylobacter lari (strain RM2100 / D67 / ATCC BAA-1060).